The following is a 425-amino-acid chain: Glucose-1-phosphate adenylyltransferase (425 aa).

Alpha-D-glucose 1-phosphate contacts are provided by residues Tyr-110, Gly-175, 190-191, and Ser-208; that span reads EK.

This sequence belongs to the bacterial/plant glucose-1-phosphate adenylyltransferase family. As to quaternary structure, homotetramer.

The catalysed reaction is alpha-D-glucose 1-phosphate + ATP + H(+) = ADP-alpha-D-glucose + diphosphate. It functions in the pathway glycan biosynthesis; glycogen biosynthesis. Its function is as follows. Involved in the biosynthesis of ADP-glucose, a building block required for the elongation reactions to produce glycogen. Catalyzes the reaction between ATP and alpha-D-glucose 1-phosphate (G1P) to produce pyrophosphate and ADP-Glc. The sequence is that of Glucose-1-phosphate adenylyltransferase from Nitrosospira multiformis (strain ATCC 25196 / NCIMB 11849 / C 71).